The primary structure comprises 136 residues: Nucleoside diphosphate kinase (136 aa).

ATP-binding residues include Lys-10, Phe-58, Arg-86, Thr-92, Arg-104, and Asn-114. Catalysis depends on His-117, which acts as the Pros-phosphohistidine intermediate.

Belongs to the NDK family. As to quaternary structure, homotetramer. Mg(2+) is required as a cofactor.

The protein resides in the cytoplasm. The enzyme catalyses a 2'-deoxyribonucleoside 5'-diphosphate + ATP = a 2'-deoxyribonucleoside 5'-triphosphate + ADP. It catalyses the reaction a ribonucleoside 5'-diphosphate + ATP = a ribonucleoside 5'-triphosphate + ADP. Functionally, major role in the synthesis of nucleoside triphosphates other than ATP. The ATP gamma phosphate is transferred to the NDP beta phosphate via a ping-pong mechanism, using a phosphorylated active-site intermediate. This Mycobacterium marinum (strain ATCC BAA-535 / M) protein is Nucleoside diphosphate kinase.